Here is a 250-residue protein sequence, read N- to C-terminus: Malonyl-[acyl-carrier protein] O-methyltransferase (250 aa).

It belongs to the methyltransferase superfamily.

It catalyses the reaction malonyl-[ACP] + S-adenosyl-L-methionine = malonyl-[ACP] methyl ester + S-adenosyl-L-homocysteine. It functions in the pathway cofactor biosynthesis; biotin biosynthesis. Converts the free carboxyl group of a malonyl-thioester to its methyl ester by transfer of a methyl group from S-adenosyl-L-methionine (SAM). It allows to synthesize pimeloyl-ACP via the fatty acid synthetic pathway. This chain is Malonyl-[acyl-carrier protein] O-methyltransferase, found in Neorickettsia risticii (strain Illinois).